A 344-amino-acid polypeptide reads, in one-letter code: Heat-inducible transcription repressor hrcA (344 aa).

It belongs to the HrcA family.

Negative regulator of class I heat shock genes (grpE-dnaK-dnaJ and groELS operons). Prevents heat-shock induction of these operons. This is Heat-inducible transcription repressor hrcA from Streptococcus pyogenes serotype M3 (strain ATCC BAA-595 / MGAS315).